We begin with the raw amino-acid sequence, 401 residues long: Argininosuccinate synthase (401 aa).

ATP-binding positions include 10-18 (AYSGGLDTS) and Ala-37. Residue Tyr-89 participates in L-citrulline binding. Gly-119 is an ATP binding site. Positions 121, 125, and 126 each coordinate L-aspartate. Asn-125 contributes to the L-citrulline binding site. Residues Arg-129, Ser-178, Ser-187, Glu-263, and Tyr-275 each coordinate L-citrulline.

The protein belongs to the argininosuccinate synthase family. Type 1 subfamily. In terms of assembly, homotetramer.

It is found in the cytoplasm. It carries out the reaction L-citrulline + L-aspartate + ATP = 2-(N(omega)-L-arginino)succinate + AMP + diphosphate + H(+). It participates in amino-acid biosynthesis; L-arginine biosynthesis; L-arginine from L-ornithine and carbamoyl phosphate: step 2/3. The chain is Argininosuccinate synthase from Buchnera aphidicola subsp. Schizaphis graminum (strain Sg).